A 213-amino-acid polypeptide reads, in one-letter code: High frequency lysogenization protein HflD homolog (213 aa).

Belongs to the HflD family.

It localises to the cytoplasm. Its subcellular location is the cell inner membrane. This is High frequency lysogenization protein HflD homolog from Nitrosococcus oceani (strain ATCC 19707 / BCRC 17464 / JCM 30415 / NCIMB 11848 / C-107).